The primary structure comprises 445 residues: Exodeoxyribonuclease 7 large subunit (445 aa).

It belongs to the XseA family. As to quaternary structure, heterooligomer composed of large and small subunits.

Its subcellular location is the cytoplasm. The enzyme catalyses Exonucleolytic cleavage in either 5'- to 3'- or 3'- to 5'-direction to yield nucleoside 5'-phosphates.. Bidirectionally degrades single-stranded DNA into large acid-insoluble oligonucleotides, which are then degraded further into small acid-soluble oligonucleotides. The chain is Exodeoxyribonuclease 7 large subunit from Xanthomonas oryzae pv. oryzae (strain MAFF 311018).